The primary structure comprises 484 residues: Glutamate--tRNA ligase (484 aa).

The short motif at 11–21 (PSPTGYLHIGN) is the 'HIGH' region element. Positions 252–256 (KLSKR) match the 'KMSKS' region motif. K255 serves as a coordination point for ATP.

This sequence belongs to the class-I aminoacyl-tRNA synthetase family. Glutamate--tRNA ligase type 1 subfamily. Monomer.

Its subcellular location is the cytoplasm. It catalyses the reaction tRNA(Glu) + L-glutamate + ATP = L-glutamyl-tRNA(Glu) + AMP + diphosphate. Its function is as follows. Catalyzes the attachment of glutamate to tRNA(Glu) in a two-step reaction: glutamate is first activated by ATP to form Glu-AMP and then transferred to the acceptor end of tRNA(Glu). The protein is Glutamate--tRNA ligase of Staphylococcus epidermidis (strain ATCC 35984 / DSM 28319 / BCRC 17069 / CCUG 31568 / BM 3577 / RP62A).